The chain runs to 114 residues: Neurotrophic factor BDNF precursor form (114 aa).

Intrachain disulfides connect Cys-14-Cys-81, Cys-59-Cys-110, and Cys-69-Cys-112.

The protein belongs to the NGF-beta family. As to quaternary structure, monomers and homodimers. Binds to NTRK2/TRKB. Can form heterodimers with other neurotrophin family members, such as NTF3 and NTF4 (in vitro), but the physiological relevance of this is not clear. BDNF precursor form: interacts with the heterodimer formed by NGFR and SORCS2. Mature BDNF has much lower affinity for the heterodimer formed by NGFR and SORCS2. N-glycosylated and glycosulfated, contrary to mature BDNF. Post-translationally, mature BDNF is produced by proteolytic removal of the propeptide, catalyzed by a FURIN family member. In addition, the precursor form is proteolytically cleaved within the propeptide, but this is not an obligatory intermediate for the production of mature BDNF. Can be converted into mature BDNF by plasmin (PLG).

It localises to the secreted. In terms of biological role, important signaling molecule that activates signaling cascades downstream of NTRK2. During development, promotes the survival and differentiation of selected neuronal populations of the peripheral and central nervous systems. Participates in axonal growth, pathfinding and in the modulation of dendritic growth and morphology. Major regulator of synaptic transmission and plasticity at adult synapses in many regions of the CNS. The versatility of BDNF is emphasized by its contribution to a range of adaptive neuronal responses including long-term potentiation (LTP), long-term depression (LTD), certain forms of short-term synaptic plasticity, as well as homeostatic regulation of intrinsic neuronal excitability. Functionally, important signaling molecule that activates signaling cascades downstream of NTRK2. Activates signaling cascades via the heterodimeric receptor formed by NGFR and SORCS2. Signaling via NGFR and SORCS2 plays a role in synaptic plasticity and long-term depression (LTD). Binding to NGFR and SORCS2 promotes neuronal apoptosis. Promotes neuronal growth cone collapse. This Macaca mulatta (Rhesus macaque) protein is Neurotrophic factor BDNF precursor form (BDNF).